The chain runs to 353 residues: Fe(3+) ions import ATP-binding protein FbpC (353 aa).

Residues 9-239 enclose the ABC transporter domain; sequence VVFENVRKTF…PASSFIADFM (231 aa). 41–48 is a binding site for ATP; that stretch reads GPSGCGKT.

This sequence belongs to the ABC transporter superfamily. Fe(3+) ion importer (TC 3.A.1.10) family. In terms of assembly, the complex is composed of two ATP-binding proteins (FbpC), two transmembrane proteins (FbpB) and a solute-binding protein (FbpA).

It is found in the cell inner membrane. It carries out the reaction Fe(3+)(out) + ATP + H2O = Fe(3+)(in) + ADP + phosphate + H(+). Functionally, part of the ABC transporter complex FbpABC involved in Fe(3+) ions import. Responsible for energy coupling to the transport system. The chain is Fe(3+) ions import ATP-binding protein FbpC from Agrobacterium fabrum (strain C58 / ATCC 33970) (Agrobacterium tumefaciens (strain C58)).